Consider the following 261-residue polypeptide: (R)-S-adenosyl-L-methionine hydrolase (261 aa).

Residues Asp-12, Asp-72, and Asn-187 each contribute to the adenosine site. The (R)-S-adenosyl-L-methionine site is built by Asn-187, Ser-231, and Val-239. Position 239 (Val-239) interacts with adenosine.

This sequence belongs to the SAM hydrolase / SAM-dependent halogenase family.

The enzyme catalyses (R)-S-adenosyl-L-methionine + H2O = adenosine + L-methionine + H(+). Activity is inhibited by chloride. In terms of biological role, catalyzes the hydrolysis of S-adenosyl-L-methionine (SAM) into adenosine and L-methionine. Is likely stereoselective, specifically hydrolyzing (R)-S-adenosyl-L-methionine ((R)-SAM), the inactive form of the ubiquitous cofactor SAM, and not the active form of SAM, (S)-S-adenosyl-L-methionine. Probaly plays a role in preventing accumulation of (R)-S-adenosyl-L-methionine in cells; maintenance of (S)-S-denosyl-L-methionine homochirality is important for cellular health given that the (R)-form is largely inactive as a methyl donor and can function as an inhibitor of methyltransferases. Shows very slow iodinase activity in vitro. This chain is (R)-S-adenosyl-L-methionine hydrolase, found in Salinispora arenicola (strain CNS-205).